A 219-amino-acid polypeptide reads, in one-letter code: 7-cyano-7-deazaguanine synthase (219 aa).

10-20 (FSGGQDSTTCL) is an ATP binding site. Residues cysteine 188, cysteine 197, cysteine 200, and cysteine 203 each coordinate Zn(2+).

This sequence belongs to the QueC family. As to quaternary structure, homodimer. Requires Zn(2+) as cofactor.

It carries out the reaction 7-carboxy-7-deazaguanine + NH4(+) + ATP = 7-cyano-7-deazaguanine + ADP + phosphate + H2O + H(+). The protein operates within purine metabolism; 7-cyano-7-deazaguanine biosynthesis. Functionally, catalyzes the ATP-dependent conversion of 7-carboxy-7-deazaguanine (CDG) to 7-cyano-7-deazaguanine (preQ(0)). The sequence is that of 7-cyano-7-deazaguanine synthase from Clostridium botulinum (strain Loch Maree / Type A3).